Here is a 90-residue protein sequence, read N- to C-terminus: Probable Fe(2+)-trafficking protein (90 aa).

The protein belongs to the Fe(2+)-trafficking protein family.

Could be a mediator in iron transactions between iron acquisition and iron-requiring processes, such as synthesis and/or repair of Fe-S clusters in biosynthetic enzymes. The protein is Probable Fe(2+)-trafficking protein of Coxiella burnetii (strain CbuG_Q212) (Coxiella burnetii (strain Q212)).